We begin with the raw amino-acid sequence, 601 residues long: Proline--tRNA ligase (601 aa).

Belongs to the class-II aminoacyl-tRNA synthetase family. ProS type 1 subfamily. Homodimer.

The protein localises to the cytoplasm. The catalysed reaction is tRNA(Pro) + L-proline + ATP = L-prolyl-tRNA(Pro) + AMP + diphosphate. In terms of biological role, catalyzes the attachment of proline to tRNA(Pro) in a two-step reaction: proline is first activated by ATP to form Pro-AMP and then transferred to the acceptor end of tRNA(Pro). As ProRS can inadvertently accommodate and process non-cognate amino acids such as alanine and cysteine, to avoid such errors it has two additional distinct editing activities against alanine. One activity is designated as 'pretransfer' editing and involves the tRNA(Pro)-independent hydrolysis of activated Ala-AMP. The other activity is designated 'posttransfer' editing and involves deacylation of mischarged Ala-tRNA(Pro). The misacylated Cys-tRNA(Pro) is not edited by ProRS. The protein is Proline--tRNA ligase of Picosynechococcus sp. (strain ATCC 27264 / PCC 7002 / PR-6) (Agmenellum quadruplicatum).